Here is a 465-residue protein sequence, read N- to C-terminus: Chaperone protein dnaJ C76, chloroplastic (465 aa).

Residues 1-38 constitute a chloroplast transit peptide; sequence MTPAIFSPTTLPPSTATWPCSTSQKLITVRSPLKFKCR. Residues 50–113 form the J domain; that stretch reads DLYDLLGIDR…ISRQAYDKEQ (64 aa). Residues 346–385 form a disordered region; sequence AALPSSGNNNGSKASSNPQVTRKTFPSEEKPTSRRENRRQ. Low complexity predominate over residues 350–362; that stretch reads SSGNNNGSKASSN. Positions 370 to 384 are enriched in basic and acidic residues; that stretch reads FPSEEKPTSRRENRR.

The protein belongs to the DnaJ family. Expressed in roots, exclusively in the stele.

Its subcellular location is the plastid. It is found in the chloroplast. Functionally, may function together with HSC70 chaperone to assist protein folding and prevent protein aggregation during salt stress in the chloroplast. Involved in root development. Required for the position-dependent cell fate determination during root hair development. In Arabidopsis thaliana (Mouse-ear cress), this protein is Chaperone protein dnaJ C76, chloroplastic.